Reading from the N-terminus, the 134-residue chain is Protein NrdI (134 aa).

Belongs to the NrdI family.

Its function is as follows. Probably involved in ribonucleotide reductase function. This Yersinia enterocolitica serotype O:8 / biotype 1B (strain NCTC 13174 / 8081) protein is Protein NrdI.